We begin with the raw amino-acid sequence, 420 residues long: MIOREX complex component 9 (420 aa).

2 helical membrane passes run 125-145 (VYKV…TFIL) and 149-169 (IVVI…FFFF).

As to quaternary structure, associates with the mitochondrial ribosome.

It localises to the mitochondrion. The protein localises to the mitochondrion membrane. Its function is as follows. Component of MIOREX complexes, large expressome-like assemblies of ribosomes with factors involved in all the steps of post-transcriptional gene expression. The polypeptide is MIOREX complex component 9 (Saccharomyces cerevisiae (strain ATCC 204508 / S288c) (Baker's yeast)).